The primary structure comprises 121 residues: Cell division protein FtsL (121 aa).

At 1-34 the chain is on the cytoplasmic side; that stretch reads MISRVTEALSKVKGSMGSHERHALPGVIGDDLLR. A helical membrane pass occupies residues 35-57; the sequence is FGKLPLCLFICIILTAVTVVTTA. Topologically, residues 58–121 are periplasmic; the sequence is HHTRLLTAQR…PSQENIVVQK (64 aa).

It belongs to the FtsL family. As to quaternary structure, part of a complex composed of FtsB, FtsL and FtsQ.

It localises to the cell inner membrane. In terms of biological role, essential cell division protein. May link together the upstream cell division proteins, which are predominantly cytoplasmic, with the downstream cell division proteins, which are predominantly periplasmic. The protein is Cell division protein FtsL of Shigella dysenteriae serotype 1 (strain Sd197).